Consider the following 432-residue polypeptide: Testis-specific Y-encoded-like protein 1 (432 aa).

3 disordered regions span residues Met-1–Ser-31, Ala-54–Ala-110, and Thr-116–Glu-135. Lys-160 is covalently cross-linked (Glycyl lysine isopeptide (Lys-Gly) (interchain with G-Cter in SUMO2)).

Belongs to the nucleosome assembly protein (NAP) family. Post-translationally, ubiquitinated by the CRL2(APPBP2) complex, which recognizes the Arg-Xaa-Xaa-Gly sequence at the C-terminus, leading to its degradation.

The protein localises to the nucleus. Its subcellular location is the nucleolus. In Bos taurus (Bovine), this protein is Testis-specific Y-encoded-like protein 1 (TSPYL1).